Here is a 354-residue protein sequence, read N- to C-terminus: MVSALLRTILVTGGAGYIGSHTVLQLLQLGFRVVVLDNLDNASELAILRVRELAGHNANNLDFRKVDLRDKQALDQIFSSQRFEAVIHFAGLKAVGESVQKPLLYYDNNLIGTITLLQVMAAHGCTKLVFSSSATVYGWPKEVPCTEESPLCAMNPYGRTKLVIEDMCRDLHASDPNWKIILLRYFNPVGAHPSGYIGEDPCGIPNNLMPFVQQVAVGRRPALTVYGTDYNTKDGTGVRDYIHVVDLADGHIAALRKLYEDSDRIGCEVYNLGTGKGTSVLEMVAAFEKASGKKIPLVFAGRRPGDAEIVYAQTAKAEKELKWKAKYGVEEMCRDLWNWASKNPYGYGSPDSSN.

Thr-8–Leu-39 contacts NAD(+). Ser-133 is a binding site for substrate. Residue Tyr-157 is the Proton acceptor of the active site.

This sequence belongs to the NAD(P)-dependent epimerase/dehydratase family. NAD(+) is required as a cofactor.

The catalysed reaction is UDP-alpha-D-glucose = UDP-alpha-D-galactose. Its pathway is carbohydrate metabolism; galactose metabolism. Functionally, catalyzes the interconversion between UDP-glucose and UDP-galactose. The protein is UDP-glucose 4-epimerase 1 (UGE-1) of Oryza sativa subsp. japonica (Rice).